We begin with the raw amino-acid sequence, 301 residues long: Averufin oxidase A (301 aa).

A signal peptide spans 1–23 (MPTYALLGATGATGSAILRCLLA). N62, N86, and N190 each carry an N-linked (GlcNAc...) asparagine glycan.

It belongs to the avfA family.

It functions in the pathway mycotoxin biosynthesis. Functionally, averufin oxidase A; part of the fragmented gene cluster that mediates the biosynthesis of dothistromin (DOTH), a polyketide toxin very similar in structure to the aflatoxin precursor, versicolorin B. The first step of the pathway is the conversion of acetate to norsolorinic acid (NOR) and requires the fatty acid synthase subunits hexA and hexB, as well as the polyketide synthase pksA. PksA combines a hexanoyl starter unit and 7 malonyl-CoA extender units to synthesize the precursor NOR. The hexanoyl starter unit is provided to the acyl-carrier protein (ACP) domain by the fungal fatty acid synthase hexA/hexB. The second step is the conversion of NOR to averantin (AVN) and requires the norsolorinic acid ketoreductase nor1, which catalyzes the dehydration of norsolorinic acid to form (1'S)-averantin. The cytochrome P450 monooxygenase avnA then catalyzes the hydroxylation of AVN to 5'hydroxyaverantin (HAVN). The next step is performed by adhA that transforms HAVN to averufin (AVF). Averufin might then be converted to hydroxyversicolorone by cypX and avfA. Hydroxyversicolorone is further converted versiconal hemiacetal acetate (VHA) by moxY. VHA is then the substrate for the versiconal hemiacetal acetate esterase est1 to yield versiconal (VAL). Versicolorin B synthase vbsA then converts VAL to versicolorin B (VERB) by closing the bisfuran ring. Then, the activity of the versicolorin B desaturase verB leads to versicolorin A (VERA). DotB, a predicted chloroperoxidase, may perform epoxidation of the A-ring of VERA. Alternatively, a cytochrome P450, such as cypX or avnA could catalyze this step. It is also possible that another, uncharacterized, cytochrome P450 enzyme is responsible for this step. Opening of the epoxide could potentially be achieved by the epoxide hydrolase epoA. However, epoA seems not to be required for DOTH biosynthesis, but other epoxide hydrolases may have the ability to complement this hydrolysis. Alternatively, opening of the epoxide ring could be achieved non-enzymatically. The next step is the deoxygenation of ring A to yield the 5,8-dihydroxyanthraquinone which is most likely catalyzed by the NADPH dehydrogenase encoded by ver1. The last stages of DOTH biosynthesis are proposed to involve hydroxylation of the bisfuran. OrdB and norB might have oxidative roles here. An alternative possibility is that cytochrome P450 monoogenases such as avnA and cypX might perform these steps in addition to previously proposed steps. This Dothistroma septosporum (Red band needle blight fungus) protein is Averufin oxidase A.